The primary structure comprises 429 residues: Mannose-6-phosphate isomerase (429 aa).

Zn(2+) contacts are provided by glutamine 110, histidine 112, glutamate 137, and histidine 282. The active site involves arginine 301.

The protein belongs to the mannose-6-phosphate isomerase type 1 family. Requires Zn(2+) as cofactor.

It is found in the cytoplasm. The enzyme catalyses D-mannose 6-phosphate = D-fructose 6-phosphate. It participates in nucleotide-sugar biosynthesis; GDP-alpha-D-mannose biosynthesis; alpha-D-mannose 1-phosphate from D-fructose 6-phosphate: step 1/2. In terms of biological role, involved in the synthesis of the GDP-mannose and dolichol-phosphate-mannose required for a number of critical mannosyl transfer reactions. The chain is Mannose-6-phosphate isomerase (PMI1) from Candida glabrata (strain ATCC 2001 / BCRC 20586 / JCM 3761 / NBRC 0622 / NRRL Y-65 / CBS 138) (Yeast).